The following is a 423-amino-acid chain: Zinc transporter ZIP13 (423 aa).

The Lumenal segment spans residues 1-15; the sequence is MPGCPCPGIGMAGQR. A helical membrane pass occupies residues 16 to 36; sequence LLFLAALALELLGGAGGSQQA. Over 37 to 68 the chain is Cytoplasmic; sequence LRSRGVAAACRLDSKESESWGALLSGERLETW. Residues 69-89 traverse the membrane as a helical segment; that stretch reads ICSLLGSLMVGLSGVFPLLVI. Over 90–108 the chain is Lumenal; sequence PLEMGTTLRSEAGARRLKQ. A helical transmembrane segment spans residues 109-129; the sequence is LLSFALGGLLGNVFLHLLPEA. At 130–149 the chain is on the cytoplasmic side; sequence WAYTNSASSGGERQSLQQQQ. The helical transmembrane segment at 150–170 threads the bilayer; that stretch reads QLGLWVIAGFLTFLVLEKLFF. At 171–235 the chain is on the lumenal side; the sequence is DSKGKEETSQ…TIDNFTHGLA (65 aa). The chain crosses the membrane as a helical span at residues 236–256; the sequence is VAASFLVSKKIGLLTTMAILL. The XEXPHE-motif signature appears at 257–262; the sequence is HEIPHE. Residues 257–278 lie on the Cytoplasmic side of the membrane; that stretch reads HEIPHEVGDFAILLRAGFDRWS. Residues 279–299 form a helical membrane-spanning segment; sequence AAKLQLSTALGGLLGACFAIC. Topologically, residues 300–368 are lumenal; the sequence is AQSPKGVGTG…RAPPPATEET (69 aa). The helical transmembrane segment at 369–389 threads the bilayer; it reads VAWILPFTSGGFLYIALVNVL. Residues 390–401 lie on the Cytoplasmic side of the membrane; the sequence is PDLLEEDDPWRS. Residues 402 to 422 traverse the membrane as a helical segment; sequence LQQVLLLCAGIVVMVLFSVFV. E423 is a topological domain (lumenal).

Belongs to the ZIP transporter (TC 2.A.5) family. Homodimer.

It is found in the golgi apparatus membrane. It localises to the cytoplasmic vesicle membrane. The protein resides in the endoplasmic reticulum membrane. The enzyme catalyses Zn(2+)(in) = Zn(2+)(out). In terms of biological role, functions as a zinc transporter transporting Zn(2+) from the Golgi apparatus to the cytosol and thus influences the zinc level at least in areas of the cytosol. May regulate beige adipocyte differentiation. This Bos taurus (Bovine) protein is Zinc transporter ZIP13.